The chain runs to 184 residues: Lipoprotein signal peptidase (184 aa).

Helical transmembrane passes span 23 to 43, 88 to 108, and 110 to 130; these read FLYY…FQVF, PGLV…FLVF, and TSYN…GNFF. Active-site residues include aspartate 142 and aspartate 157. The helical transmembrane segment at 156 to 176 threads the bilayer; sequence ADCCITFSFIGLFLSFLIQFF.

Belongs to the peptidase A8 family.

The protein localises to the cell membrane. It carries out the reaction Release of signal peptides from bacterial membrane prolipoproteins. Hydrolyzes -Xaa-Yaa-Zaa-|-(S,diacylglyceryl)Cys-, in which Xaa is hydrophobic (preferably Leu), and Yaa (Ala or Ser) and Zaa (Gly or Ala) have small, neutral side chains.. Its pathway is protein modification; lipoprotein biosynthesis (signal peptide cleavage). Its function is as follows. This protein specifically catalyzes the removal of signal peptides from prolipoproteins. The polypeptide is Lipoprotein signal peptidase (Mycoplasma pneumoniae (strain ATCC 29342 / M129 / Subtype 1) (Mycoplasmoides pneumoniae)).